The chain runs to 289 residues: 33 kDa chaperonin (289 aa).

2 cysteine pairs are disulfide-bonded: Cys237-Cys239 and Cys270-Cys273.

The protein belongs to the HSP33 family. Under oxidizing conditions two disulfide bonds are formed involving the reactive cysteines. Under reducing conditions zinc is bound to the reactive cysteines and the protein is inactive.

It is found in the cytoplasm. Functionally, redox regulated molecular chaperone. Protects both thermally unfolding and oxidatively damaged proteins from irreversible aggregation. Plays an important role in the bacterial defense system toward oxidative stress. The polypeptide is 33 kDa chaperonin (Oceanobacillus iheyensis (strain DSM 14371 / CIP 107618 / JCM 11309 / KCTC 3954 / HTE831)).